The chain runs to 464 residues: tRNA modification GTPase MnmE (464 aa).

Positions 25, 87, and 130 each coordinate (6S)-5-formyl-5,6,7,8-tetrahydrofolate. A TrmE-type G domain is found at 226-386; sequence GLSVVLAGQP…LRAELLRIAG (161 aa). Asn236 provides a ligand contact to K(+). GTP is bound by residues 236–241, 255–261, and 280–283; these read NVGKSS, TPIAGTT, and DTAG. Position 240 (Ser240) interacts with Mg(2+). Thr255, Ile257, and Thr260 together coordinate K(+). Thr261 is a binding site for Mg(2+). Lys464 is a (6S)-5-formyl-5,6,7,8-tetrahydrofolate binding site.

It belongs to the TRAFAC class TrmE-Era-EngA-EngB-Septin-like GTPase superfamily. TrmE GTPase family. As to quaternary structure, homodimer. Heterotetramer of two MnmE and two MnmG subunits. K(+) is required as a cofactor.

It localises to the cytoplasm. In terms of biological role, exhibits a very high intrinsic GTPase hydrolysis rate. Involved in the addition of a carboxymethylaminomethyl (cmnm) group at the wobble position (U34) of certain tRNAs, forming tRNA-cmnm(5)s(2)U34. The protein is tRNA modification GTPase MnmE of Burkholderia ambifaria (strain ATCC BAA-244 / DSM 16087 / CCUG 44356 / LMG 19182 / AMMD) (Burkholderia cepacia (strain AMMD)).